The following is a 4574-amino-acid chain: E3 ubiquitin-protein ligase MYCBP2 (4574 aa).

Disordered stretches follow at residues 92-115 and 599-620; these read RGKKALSKKKLKRRQKVKSKVKTR and SASKGEDGESTKSRRQPKPYKP. RCC1 repeat units lie at residues 591–646, 690–746, 943–993, and 995–1051; these read DGSV…IVTK, SGEV…MMCQ, NGDV…VLLM, and GQVF…LRID. Over residues 611-620 the composition is skewed to basic residues; it reads SRRQPKPYKP. The cysteines at positions 1733 and 1850 are disulfide-linked. 2 disordered regions span residues 1976 to 1998 and 2313 to 2332; these read APPTFNPNQSTDSTTGNQPEQGL and LQRLPGTSSNSATGTDLTFG. Composition is skewed to polar residues over residues 1981–1998 and 2317–2328; these read NPNQSTDSTTGNQPEQGL and PGTSSNSATGTD. The stretch at 2336 to 2417 is one Filamin repeat; sequence APKLEATYEP…IHVTIDGIEI (82 aa). Disordered stretches follow at residues 2613–2824, 2845–2922, 3085–3116, 3345–3365, and 3505–3526; these read GFDY…PSPH, SNDE…KQAM, SPGSSAILKKKENEKDSKKTKKEKKKKEKAEV, PGSNMKSMPPSLETSPITDSD, and FETEEEEDEENKGNKENLEQEK. 2 stretches are compositionally biased toward basic and acidic residues: residues 2639–2663 and 2678–2688; these read HRQESRSSKTDSHSNRSVDQVKSKN and DTGKLRSDSHS. Positions 2716 to 2729 are enriched in polar residues; that stretch reads NPGSRSSSPKQKTF. The span at 2730 to 2745 shows a compositional bias: low complexity; the sequence is TSGRSSPSSTSSPRSS. Basic and acidic residues-rich tracts occupy residues 2761 to 2772, 2854 to 2864, and 2874 to 2883; these read VHLDPPRERSKS, SELHNAEEGSS, and PVKEELESRS. Composition is skewed to basic residues over residues 2887 to 2900 and 3102 to 3111; these read VSRKTSSRHVRPKK and KKTKKEKKKK. Over residues 3515–3526 the composition is skewed to basic and acidic residues; it reads NKGNKENLEQEK. One can recognise a DOC domain in the interval 3617 to 3795; sequence FNISVQSGYE…SVAQQKNCEA (179 aa). Residues 3815 to 3841 are disordered; the sequence is GDAEPTPEQEEKNLLSSPEGEDKAPSD. Zn(2+) contacts are provided by Cys4324, Cys4327, Cys4342, His4344, His4347, Cys4350, Cys4371, Cys4374, Cys4440, and Cys4443. The segment at 4324 to 4375 adopts an RING-type; atypical zinc-finger fold; the sequence is CMICFTEALSAAPAIQLDCSHVFHLQCTRRVLENRWLGPRITFGFMSCPICK. Positions 4435-4572 are tandem cysteine domain; sequence YAYYVCFKCK…LGCGVCRNAH (138 aa). Cys4454 is an active-site residue. The Zn(2+) site is built by Cys4471, Cys4474, Cys4483, His4486, Cys4495, Cys4498, and Cys4499. Cys4506 is a catalytic residue. Zn(2+) is bound by residues Cys4513, Cys4516, Cys4534, Cys4548, His4554, Cys4565, and Cys4568.

The protein belongs to the RING-Cys relay (RCR) family. Widely expressed when the visual system begins developing. In the eye, expressed in all cells, including retinal ganglion cells, with no obvious gradient.

The protein localises to the nucleus. The protein resides in the cell projection. Its subcellular location is the axon. It localises to the cytoplasm. It is found in the cytoskeleton. The enzyme catalyses [E2 ubiquitin-conjugating enzyme]-S-ubiquitinyl-L-cysteine + [acceptor protein]-L-threonine = [E2 ubiquitin-conjugating enzyme]-L-cysteine + [acceptor protein]-3-O-ubiquitinyl-L-threonine.. The protein operates within protein modification; protein ubiquitination. Its function is as follows. Atypical E3 ubiquitin-protein ligase which specifically mediates ubiquitination of threonine and serine residues on target proteins, instead of ubiquitinating lysine residues. Shows esterification activity towards both threonine and serine, with a preference for threonine, and acts via two essential catalytic cysteine residues that relay ubiquitin to its substrate via thioester intermediates. Interacts with the E2 enzymes UBE2D1, UBE2D3, UBE2E1 and UBE2L3. Plays a key role in neural development, probably by mediating ubiquitination of threonine residues on target proteins. Involved in different processes such as regulation of neurite outgrowth, synaptic growth, synaptogenesis and axon degeneration. Required in the visual system for correct fasciculation, targeting and mapping of retinal axons. Acts as a regulator of pteridine synthesis. May play a role in the regulation of the circadian clock gene expression. This is E3 ubiquitin-protein ligase MYCBP2 from Danio rerio (Zebrafish).